A 1311-amino-acid polypeptide reads, in one-letter code: Mitogen-activated protein kinase kinase kinase 19 (1311 aa).

Disordered stretches follow at residues 85 to 119 (PDPL…SPPD), 250 to 274 (PLSQ…PVEH), 330 to 363 (SVKE…YLSS), 396 to 472 (MTPA…NPEM), 486 to 508 (EGTS…PAQN), 576 to 607 (HRPH…KQAF), and 734 to 767 (SKDK…FLSS). The segment covering 250 to 261 (PLSQSAEFSSSK) has biased composition (polar residues). Composition is skewed to basic and acidic residues over residues 262–274 (NHQE…PVEH), 330–345 (SVKE…RDSG), and 450–464 (LEGH…KIPM). The span at 734–748 (SKDKGCKDMGGHTED) shows a compositional bias: basic and acidic residues. The region spanning 1044–1307 (WTKGEILGRG…ALQLLKHSFL (264 aa)) is the Protein kinase domain. ATP-binding positions include 1050-1058 (LGRGAYGTV) and K1072. D1169 serves as the catalytic Proton acceptor.

This sequence belongs to the protein kinase superfamily. STE Ser/Thr protein kinase family. STE20 subfamily.

The enzyme catalyses L-seryl-[protein] + ATP = O-phospho-L-seryl-[protein] + ADP + H(+). The catalysed reaction is L-threonyl-[protein] + ATP = O-phospho-L-threonyl-[protein] + ADP + H(+). This is Mitogen-activated protein kinase kinase kinase 19 (Map3k19) from Mus musculus (Mouse).